We begin with the raw amino-acid sequence, 265 residues long: U6 snRNA phosphodiesterase 1 (265 aa).

Residues 1-22 form a disordered region; that stretch reads MSLVCYESSSSGEDDDETISDN. The active-site Proton acceptor is His109. AMP contacts are provided by residues 109-111 and 195-201; these read HLS and DFLLHIS. A UMP-binding site is contributed by 197–201; sequence LLHIS. The active-site Proton donor is His199.

Belongs to the 2H phosphoesterase superfamily. USB1 family.

The protein localises to the nucleus. It catalyses the reaction a 3'-end uridylyl-uridine-RNA = a 3'-end 2',3'-cyclophospho-uridine-RNA + uridine. Functionally, 3'-5' RNA exonuclease that trims the 3' end of oligo(U) tracts of the pre-U6 small nuclear RNA (snRNA) molecule, leading to the formation of a U6 snRNA 3' end-terminated with a 2',3'-cyclic phosphate.d. Participates in the U6 snRNA 3' end processing that prevents U6 snRNA degradation. The chain is U6 snRNA phosphodiesterase 1 from Schizosaccharomyces pombe (strain 972 / ATCC 24843) (Fission yeast).